An 850-amino-acid chain; its full sequence is Protein stoned-A (850 aa).

Over residues 1–16 (MLKLPKGLKKKKKKSK) the composition is skewed to basic residues. Disordered regions lie at residues 1 to 95 (MLKL…AAGG) and 125 to 164 (KESF…LGQI). The interval 26–290 (ELEQYKRDLK…QNLLLSESIE (265 aa)) is interaction with Syt. Basic and acidic residues predominate over residues 28 to 38 (EQYKRDLKAKQ). Residues 78–91 (ILNAQQQLSDQNQG) are compositionally biased toward polar residues. Basic and acidic residues predominate over residues 136–164 (AEKKKQKEEEAARLEAEQQEREKQRLGQI). Residues 224–226 (DPF) carry the DPF 1 motif. Disordered stretches follow at residues 345 to 375 (EEEE…EEDD) and 412 to 498 (GSWA…PPFL). Residues 431-440 (PPPPVRPPTG) show a composition bias toward pro residues. Positions 451-462 (SEDEEENPEDDP) are enriched in acidic residues. 2 consecutive short sequence motifs (DPF) follow at residues 461 to 463 (DPF) and 535 to 537 (DPF). 4 disordered regions span residues 573 to 610 (HSLS…QRKS), 634 to 673 (GNEL…TSHV), 738 to 760 (RKKL…FDTS), and 800 to 825 (LGLG…IDPF). Composition is skewed to basic and acidic residues over residues 574-588 (SLSD…DQKE) and 596-607 (LEQKETDFDTAQ). 3 consecutive short sequence motifs (DPF) follow at residues 666 to 668 (DPF), 755 to 757 (DPF), and 823 to 825 (DPF).

Interacts with the second C2 domain of Syt.

It is found in the cytoplasm. It localises to the synapse. The protein localises to the cytoplasmic vesicle. The protein resides in the secretory vesicle. Its subcellular location is the synaptic vesicle. Functionally, adapter protein involved in endocytic recycling of synaptic vesicles membranes. May act by mediating the retrieval of synaptotagmin protein Syt from the plasma membrane, thereby facilitating the internalization of multiple synaptic vesicles from the plasma membrane. The sequence is that of Protein stoned-A (stnA) from Drosophila melanogaster (Fruit fly).